A 1343-amino-acid polypeptide reads, in one-letter code: Spermatogenesis-associated protein 31A6 (1343 aa).

A helical transmembrane segment spans residues 23–43; sequence PWVLDIFLTLVFALGFFFLLL. Disordered stretches follow at residues 55–88, 106–235, 624–654, 895–951, 1080–1156, and 1309–1331; these read PSPSPGKRKCPVGRRRRPRGRMKNHSLRAGRECP, GPHL…STLI, DESPGTSQAKGKPSPWQSSTSTGESSKEAQK, PRGI…REAV, VQEE…PPSV, and KAVSPVSPPQHWPKTSGASSHHH. Residues 60–82 show a composition bias toward basic residues; that stretch reads GKRKCPVGRRRRPRGRMKNHSLR. The segment covering 165–178 has biased composition (polar residues); it reads LASTPSPGPMTTSV. A compositionally biased stretch (pro residues) spans 198–222; the sequence is PEPPALFPHPPHTPDPLACSPPPPK. Polar residues-rich tracts occupy residues 627-647 and 923-944; these read PGTSQAKGKPSPWQSSTSTGE and LTYSLTGSTQQSRSLGAQSSKA. Basic and acidic residues-rich tracts occupy residues 1104–1123 and 1133–1142; these read HKSEKSRKPNLEKHEERLEG and RKTEDTHQDE.

Belongs to the SPATA31 family.

The protein localises to the membrane. May play a role in spermatogenesis. The chain is Spermatogenesis-associated protein 31A6 (SPATA31A6) from Homo sapiens (Human).